A 373-amino-acid chain; its full sequence is Ferroptosis suppressor protein 1 (373 aa).

Glycine 2 carries N-myristoyl glycine lipidation. Residues 7–27 traverse the membrane as a helical segment; it reads VDTGAVHVVIVGGGFGGIAAA. Residues 18–22, arginine 54, and valine 82 contribute to the 6-hydroxy-FAD site; that span reads GGGFG. At lysine 168 the chain carries N6-acetyllysine. Aspartate 285 is a 6-hydroxy-FAD binding site.

This sequence belongs to the FAD-dependent oxidoreductase family. In terms of assembly, interacts with importin subunits KPNA2 and IPO5; this interaction likely mediates the translocation into the nucleus upon oxidative stress. It depends on 6-hydroxy-FAD as a cofactor. N-myristoylation at Gly-2 mediates the recruitment to lipid droplets and plasma membrane. Post-translationally, acetylation at Lys-168 prevents AIFM2 ubiquitination and degradation, thereby inhibiting ferroptosis. KAT2B mediates acetylation at Lys-168, while HDAC3 removes it. In terms of processing, ubiquitinated. AIFM2 undergoes 'Lys-29'-ubiquitination and proteasomal degradation, which is inhibited by acetylation at Lys-168. In terms of tissue distribution, detected in most normal tissues as two transcripts of 1.8 and 4.0 kb in length, respectively. Highly expressed in liver, testis, and kidney, and expressed at lower levels in pancreas, spleen, brain and lung. Expressed in heart (at protein level).

The protein resides in the lipid droplet. It localises to the cell membrane. The protein localises to the cytoplasm. Its subcellular location is the mitochondrion membrane. It is found in the nucleus. The catalysed reaction is ubiquinone-10 + NADH + H(+) = ubiquinol-10 + NAD(+). The enzyme catalyses phylloquinone + NADH + H(+) = phylloquinol + NAD(+). It catalyses the reaction menaquinone-4 + NADH + H(+) = menaquinol-4 + NAD(+). It carries out the reaction menadione + NADH + H(+) = menadiol + NAD(+). Its activity is regulated as follows. The modification by 4-hydroxy-2-nonenal (HNE) adduction in mitochondria results in loss of the oxidoreductase activity and activation of a novel function in mitochondrial oxidative stress signaling. Functionally, a NAD(P)H-dependent oxidoreductase that acts as a key inhibitor of ferroptosis. At the plasma membrane, catalyzes reduction of coenzyme Q/ubiquinone-10 to ubiquinol-10, a lipophilic radical-trapping antioxidant that prevents lipid oxidative damage and consequently ferroptosis. Acts in parallel to GPX4 to suppress phospholipid peroxidation and ferroptosis. This anti-ferroptotic function is independent of cellular glutathione levels. Also acts as a potent radical-trapping antioxidant by mediating warfarin-resistant vitamin K reduction in the canonical vitamin K cycle: catalyzes NAD(P)H-dependent reduction of vitamin K (phylloquinone, menaquinone-4 and menadione) to hydroquinone forms. Hydroquinones act as potent radical-trapping antioxidants inhibitor of phospholipid peroxidation and ferroptosis. May play a role in mitochondrial stress signaling. Upon oxidative stress, associates with the lipid peroxidation end product 4-hydroxy-2-nonenal (HNE) forming a lipid adduct devoid of oxidoreductase activity, which then translocates from mitochondria into the nucleus triggering DNA damage and cell death. The chain is Ferroptosis suppressor protein 1 from Mus musculus (Mouse).